The chain runs to 176 residues: Large ribosomal subunit protein uL6 (176 aa).

This sequence belongs to the universal ribosomal protein uL6 family. In terms of assembly, part of the 50S ribosomal subunit.

Functionally, this protein binds to the 23S rRNA, and is important in its secondary structure. It is located near the subunit interface in the base of the L7/L12 stalk, and near the tRNA binding site of the peptidyltransferase center. This chain is Large ribosomal subunit protein uL6, found in Dechloromonas aromatica (strain RCB).